The primary structure comprises 305 residues: MELHYLAKKSNQADLCDARDWSSRGLPGDQADTAATRAALCCQKQCASTPRATEMEGSKLSSSPASPSSSLQNSTLQPDAFPPGLLHSGNNQITAERKVCNCCSQELETSFTYVDKNINLEQRNRSSPSAKGHNHPGELGWENPNEWSQEAAISLISEEEDDTSSEATSSGKSIDYGFISAILFLVTGILLVIISYIVPREVTVDPNTVAAREMERLEKESARLGAHLDRCVIAGLCLLTLGGVILSCLLMMSMWKGELYRRNRFASSKESAKLYGSFNFRMKTSTNENTLELSLVEEDALAVQS.

Disordered regions lie at residues 52–88 and 123–143; these read ATEM…LLHS and RNRS…GWEN. Residues 58 to 78 show a composition bias toward low complexity; it reads SKLSSSPASPSSSLQNSTLQP. 2 consecutive transmembrane segments (helical) span residues 178–198 and 232–252; these read FISA…SYIV and VIAG…LLMM.

Belongs to the TMEM74 family. As to expression, expressed in heart, lung, and placenta.

It is found in the lysosome membrane. It localises to the cytoplasmic vesicle. Its subcellular location is the autophagosome membrane. In terms of biological role, plays an essential role in autophagy. TMEM74-induced autophagy may involve PI3K signal transduction. This is Transmembrane protein 74 (TMEM74) from Homo sapiens (Human).